We begin with the raw amino-acid sequence, 348 residues long: Outer membrane protein assembly factor BamC (348 aa).

Positions 1 to 19 (MKYSHQLVIGSLAVFVLTA) are cleaved as a signal peptide. The N-palmitoyl cysteine moiety is linked to residue cysteine 20. The S-diacylglycerol cysteine moiety is linked to residue cysteine 20.

The protein belongs to the BamC family. Part of the Bam complex.

It is found in the cell outer membrane. Part of the outer membrane protein assembly complex, which is involved in assembly and insertion of beta-barrel proteins into the outer membrane. The sequence is that of Outer membrane protein assembly factor BamC from Vibrio atlanticus (strain LGP32) (Vibrio splendidus (strain Mel32)).